Consider the following 279-residue polypeptide: Acyl-[acyl-carrier-protein]--UDP-N-acetylglucosamine O-acyltransferase (279 aa).

A disordered region spans residues 256-279 (IERGADKDALQDESVEKEGALVES).

This sequence belongs to the transferase hexapeptide repeat family. LpxA subfamily. As to quaternary structure, homotrimer.

It localises to the cytoplasm. It catalyses the reaction a (3R)-hydroxyacyl-[ACP] + UDP-N-acetyl-alpha-D-glucosamine = a UDP-3-O-[(3R)-3-hydroxyacyl]-N-acetyl-alpha-D-glucosamine + holo-[ACP]. It participates in glycolipid biosynthesis; lipid IV(A) biosynthesis; lipid IV(A) from (3R)-3-hydroxytetradecanoyl-[acyl-carrier-protein] and UDP-N-acetyl-alpha-D-glucosamine: step 1/6. Functionally, involved in the biosynthesis of lipid A, a phosphorylated glycolipid that anchors the lipopolysaccharide to the outer membrane of the cell. The protein is Acyl-[acyl-carrier-protein]--UDP-N-acetylglucosamine O-acyltransferase of Chlamydia caviae (strain ATCC VR-813 / DSM 19441 / 03DC25 / GPIC) (Chlamydophila caviae).